We begin with the raw amino-acid sequence, 194 residues long: Molybdenum cofactor guanylyltransferase (194 aa).

GTP contacts are provided by residues 12-14 (LAG), K25, N53, D70, and D100. D100 is a Mg(2+) binding site.

The protein belongs to the MobA family. Monomer. Requires Mg(2+) as cofactor.

The protein resides in the cytoplasm. The enzyme catalyses Mo-molybdopterin + GTP + H(+) = Mo-molybdopterin guanine dinucleotide + diphosphate. Transfers a GMP moiety from GTP to Mo-molybdopterin (Mo-MPT) cofactor (Moco or molybdenum cofactor) to form Mo-molybdopterin guanine dinucleotide (Mo-MGD) cofactor. This chain is Molybdenum cofactor guanylyltransferase, found in Photobacterium profundum (strain SS9).